A 267-amino-acid polypeptide reads, in one-letter code: Phosphatidylglycerol--prolipoprotein diacylglyceryl transferase (267 aa).

3 helical membrane passes run 21–41 (VSLH…YWLG), 60–80 (LLFN…VFFY), and 95–115 (IWEG…AMLW). R143 is an a 1,2-diacyl-sn-glycero-3-phospho-(1'-sn-glycerol) binding site. A run of 2 helical transmembrane segments spans residues 203–223 (GSVA…VEYF) and 240–260 (GQLL…VAYY).

The protein belongs to the Lgt family.

Its subcellular location is the cell inner membrane. It catalyses the reaction L-cysteinyl-[prolipoprotein] + a 1,2-diacyl-sn-glycero-3-phospho-(1'-sn-glycerol) = an S-1,2-diacyl-sn-glyceryl-L-cysteinyl-[prolipoprotein] + sn-glycerol 1-phosphate + H(+). The protein operates within protein modification; lipoprotein biosynthesis (diacylglyceryl transfer). Catalyzes the transfer of the diacylglyceryl group from phosphatidylglycerol to the sulfhydryl group of the N-terminal cysteine of a prolipoprotein, the first step in the formation of mature lipoproteins. The protein is Phosphatidylglycerol--prolipoprotein diacylglyceryl transferase of Glaesserella parasuis serovar 5 (strain SH0165) (Haemophilus parasuis).